The following is a 38-amino-acid chain: Potassium channel toxin alpha-KTx 3.3 (38 aa).

3 disulfide bridges follow: Cys-8–Cys-28, Cys-14–Cys-33, and Cys-18–Cys-35. Residues 26 to 33 (GKCMNRKC) are interaction with Ca(2+)-activated K(+) channels.

The protein belongs to the short scorpion toxin superfamily. Potassium channel inhibitor family. Alpha-KTx 03 subfamily. In terms of tissue distribution, expressed by the venom gland.

The protein localises to the secreted. In terms of biological role, potent inhibitor of shaker potassium channels as well as the mammalian homologs of shaker. The sequence is that of Potassium channel toxin alpha-KTx 3.3 from Leiurus hebraeus (Hebrew deathstalker scorpion).